Here is a 207-residue protein sequence, read N- to C-terminus: Probable GTP-binding protein EngB (207 aa).

Residues 24-199 (GGYEVAFAGR…RGIVGGWLGL (176 aa)) enclose the EngB-type G domain. GTP is bound by residues 32–39 (GRSNAGKS), 59–63 (GRTQQ), 77–80 (DLPG), 144–147 (TKAD), and 178–180 (YSG). 2 residues coordinate Mg(2+): Ser39 and Thr61.

The protein belongs to the TRAFAC class TrmE-Era-EngA-EngB-Septin-like GTPase superfamily. EngB GTPase family. Mg(2+) serves as cofactor.

In terms of biological role, necessary for normal cell division and for the maintenance of normal septation. The protein is Probable GTP-binding protein EngB of Xanthomonas oryzae pv. oryzae (strain MAFF 311018).